Consider the following 386-residue polypeptide: Convicilin (386 aa).

The N-terminal stretch at 1–29 (MATTIKSRFPLLLLLGIIFLASVVSVTYA) is a signal peptide. Residues 33 to 199 (EGSEPRVPAQ…EERSSESQER (167 aa)) form a disordered region. Basic and acidic residues-rich tracts occupy residues 41–65 (AQRE…PSYE), 74–91 (QRER…RHGE), 104–144 (EKQK…RWER), and 153–186 (EEWR…HQRE). The 158-residue stretch at 202-359 (PFLFKSNKFL…SYNTRYETIE (158 aa)) folds into the Cupin type-1 domain. Positions 367-386 (EKDRKRRQQGEETDAIVKVS) are disordered.

It belongs to the 7S seed storage protein family.

It localises to the vacuole. Its subcellular location is the aleurone grain. Functionally, seed storage protein. The sequence is that of Convicilin (CVCB) from Pisum sativum (Garden pea).